A 341-amino-acid chain; its full sequence is Endoglucanase 1 (341 aa).

The first 16 residues, 1–16 (MKTATLLAALSVLAGA), serve as a signal peptide directing secretion. Positions 17–30 (LAAPLAGDSALHRR) are excised as a propeptide. E166 acts as the Proton donor in catalysis. The active-site Nucleophile is E275.

The protein belongs to the glycosyl hydrolase 5 (cellulase A) family.

It catalyses the reaction Endohydrolysis of (1-&gt;4)-beta-D-glucosidic linkages in cellulose, lichenin and cereal beta-D-glucans.. Has endoglucanase activity on carboxymethyl-cellulose (CMC). The polypeptide is Endoglucanase 1 (CMC1) (Saitozyma flava (Cryptococcus flavus)).